Consider the following 142-residue polypeptide: Hemoglobin subunit alpha-A (142 aa).

The region spanning 2–142 is the Globin domain; it reads VLSPTDKSIV…VSTVLTSKYR (141 aa). H59 serves as a coordination point for O2. Position 88 (H88) interacts with heme b.

It belongs to the globin family. Heterotetramer of two alpha chains and two beta chains. Red blood cells.

Functionally, involved in oxygen transport from the lung to the various peripheral tissues. This chain is Hemoglobin subunit alpha-A (HBAA), found in Otolemur crassicaudatus (Brown greater galago).